The chain runs to 416 residues: Gamma-glutamyl phosphate reductase (416 aa).

This sequence belongs to the gamma-glutamyl phosphate reductase family.

It localises to the cytoplasm. The enzyme catalyses L-glutamate 5-semialdehyde + phosphate + NADP(+) = L-glutamyl 5-phosphate + NADPH + H(+). It functions in the pathway amino-acid biosynthesis; L-proline biosynthesis; L-glutamate 5-semialdehyde from L-glutamate: step 2/2. Its function is as follows. Catalyzes the NADPH-dependent reduction of L-glutamate 5-phosphate into L-glutamate 5-semialdehyde and phosphate. The product spontaneously undergoes cyclization to form 1-pyrroline-5-carboxylate. This is Gamma-glutamyl phosphate reductase from Salmonella agona (strain SL483).